A 157-amino-acid polypeptide reads, in one-letter code: Ribosome maturation factor RimP (157 aa).

This sequence belongs to the RimP family.

It is found in the cytoplasm. In terms of biological role, required for maturation of 30S ribosomal subunits. This Synechococcus sp. (strain JA-3-3Ab) (Cyanobacteria bacterium Yellowstone A-Prime) protein is Ribosome maturation factor RimP.